Reading from the N-terminus, the 40-residue chain is Allophycocyanin alpha-B chain (40 aa).

It belongs to the phycobiliprotein family. As to quaternary structure, heterodimer of an alpha and a beta chain. Post-translationally, contains one covalently linked bilin chromophore.

It is found in the cellular thylakoid membrane. Light-harvesting photosynthetic bile pigment-protein from the phycobiliprotein complex. Allophycocyanin has a maximum absorption at approximately 650 nanometers. This Mastigocladus laminosus (Fischerella sp.) protein is Allophycocyanin alpha-B chain.